A 103-amino-acid chain; its full sequence is ATP-dependent Clp protease adapter protein ClpS 1 (103 aa).

It belongs to the ClpS family. In terms of assembly, binds to the N-terminal domain of the chaperone ClpA.

Involved in the modulation of the specificity of the ClpAP-mediated ATP-dependent protein degradation. The protein is ATP-dependent Clp protease adapter protein ClpS 1 of Rhodopseudomonas palustris (strain ATCC BAA-98 / CGA009).